The primary structure comprises 450 residues: UDP-N-acetylmuramoylalanine--D-glutamate ligase (450 aa).

Residue 119–125 participates in ATP binding; sequence GSNGKTT.

Belongs to the MurCDEF family.

It is found in the cytoplasm. The catalysed reaction is UDP-N-acetyl-alpha-D-muramoyl-L-alanine + D-glutamate + ATP = UDP-N-acetyl-alpha-D-muramoyl-L-alanyl-D-glutamate + ADP + phosphate + H(+). It participates in cell wall biogenesis; peptidoglycan biosynthesis. Functionally, cell wall formation. Catalyzes the addition of glutamate to the nucleotide precursor UDP-N-acetylmuramoyl-L-alanine (UMA). The chain is UDP-N-acetylmuramoylalanine--D-glutamate ligase from Streptococcus pneumoniae (strain P1031).